Here is a 399-residue protein sequence, read N- to C-terminus: 3-phosphoshikimate 1-carboxyvinyltransferase (399 aa).

Lys-19, Ser-20, and Arg-24 together coordinate 3-phosphoshikimate. A phosphoenolpyruvate-binding site is contributed by Lys-19. The phosphoenolpyruvate site is built by Gly-83 and Arg-111. Ser-152, Ser-153, Gln-154, Asp-288, Gln-310, and Lys-314 together coordinate 3-phosphoshikimate. A phosphoenolpyruvate-binding site is contributed by Gln-154. Asp-288 acts as the Proton acceptor in catalysis. The phosphoenolpyruvate site is built by Arg-318, Arg-359, and Lys-385.

The protein belongs to the EPSP synthase family. Monomer.

It localises to the cytoplasm. It carries out the reaction 3-phosphoshikimate + phosphoenolpyruvate = 5-O-(1-carboxyvinyl)-3-phosphoshikimate + phosphate. Its pathway is metabolic intermediate biosynthesis; chorismate biosynthesis. In terms of biological role, catalyzes the transfer of the enolpyruvyl moiety of phosphoenolpyruvate (PEP) to the 5-hydroxyl of shikimate-3-phosphate (S3P) to produce enolpyruvyl shikimate-3-phosphate and inorganic phosphate. The sequence is that of 3-phosphoshikimate 1-carboxyvinyltransferase from Thermococcus kodakarensis (strain ATCC BAA-918 / JCM 12380 / KOD1) (Pyrococcus kodakaraensis (strain KOD1)).